A 583-amino-acid chain; its full sequence is Aspartate--tRNA ligase (583 aa).

Position 174 (E174) interacts with L-aspartate. The interval 198 to 201 is aspartate; sequence QITK. R220 contacts L-aspartate. ATP is bound by residues 220 to 222 and Q229; that span reads RDE. Residue H443 coordinates L-aspartate. ATP is bound at residue E477. R484 provides a ligand contact to L-aspartate. 529–532 lines the ATP pocket; it reads GLDR.

Belongs to the class-II aminoacyl-tRNA synthetase family. Type 1 subfamily. In terms of assembly, homodimer.

The protein localises to the cytoplasm. It catalyses the reaction tRNA(Asp) + L-aspartate + ATP = L-aspartyl-tRNA(Asp) + AMP + diphosphate. Catalyzes the attachment of L-aspartate to tRNA(Asp) in a two-step reaction: L-aspartate is first activated by ATP to form Asp-AMP and then transferred to the acceptor end of tRNA(Asp). The sequence is that of Aspartate--tRNA ligase from Streptococcus agalactiae serotype Ia (strain ATCC 27591 / A909 / CDC SS700).